Consider the following 337-residue polypeptide: MSLEQEEETQPGRLLGRRDAVPAFIEPNVRFWITERQSFIRRFLQWTELLDPTNVFISVESIENSRQLLCTNEDVSSPASADQRIQEAWKRSLATVHPDSSNLIPKLFRPAAFLPFMAPTVFLSMTPLKGIKSVILPQVFLCAYMAAFNSINGNRSYTCKPLERSLLMAGAVASSTFLGVIPQFVQMKYGLTGPWIKRLLPVIFLVQASGMNVYMSRSLESIKGIAVMDKEGNVLGHSRIAGTKAVRETLASRIVLFGTSALIPEVFTYFFKRTQYFRKNPGSLWILKLSCTVLAMGLMVPFSFSIFPQIGQIQYCSLEEKIQSPTEETEIFYHRGV.

The residue at position 2 (Ser2) is an N-acetylserine. The next 3 helical transmembrane spans lie at 111–131 (AAFLPFMAPTVFLSMTPLKGI), 133–153 (SVILPQVFLCAYMAAFNSING), and 165–185 (SLLMAGAVASSTFLGVIPQFV). Lys197 carries the N6-acetyllysine modification. 2 helical membrane-spanning segments follow: residues 251–271 (ASRIVLFGTSALIPEVFTYFF) and 293–313 (VLAMGLMVPFSFSIFPQIGQI).

This sequence belongs to the sideroflexin family.

The protein localises to the mitochondrion inner membrane. Its function is as follows. Mitochondrial amino-acid transporter. Does not act as a serine transporter: not able to mediate transport of serine into mitochondria. The protein is Sideroflexin-4 of Homo sapiens (Human).